Here is a 245-residue protein sequence, read N- to C-terminus: Cysteine-rich secretory protein 3 (245 aa).

The first 20 residues, 1–20, serve as a signal peptide directing secretion; it reads MTLFPVLLFLVAGLLPSFPA. Residues 43–171 enclose the SCP domain; the sequence is VNKHNELRRA…VLKYYYVCQY (129 aa). Disulfide bonds link Cys-191-Cys-198, Cys-194-Cys-203, Cys-207-Cys-240, Cys-216-Cys-234, and Cys-225-Cys-238. In terms of domain architecture, ShKT spans 207-240; it reads CKYEDLYSNCKSLKLTLTCKHQLVRDSCKASCNC. Asn-239 is a glycosylation site (N-linked (GlcNAc...) asparagine).

The protein belongs to the CRISP family. As to quaternary structure, interacts with A1BG. As to expression, salivary gland, pancreas and prostate &gt; epididymis, ovary, thymus and colon.

It localises to the secreted. This chain is Cysteine-rich secretory protein 3 (CRISP3), found in Homo sapiens (Human).